Consider the following 252-residue polypeptide: MLSIDLNCDCGESYGAFQIGDDEGILPFVSSANIACGGHAGDPIVMRHTVRRCRELGVAVGAHPSYPDLHGFGRRVLPMSPAEIEAWVLAQIGALAAIARAEGVELRHVKPHGALYNVAARDHVVATAVARAVAAFSHELALVGLADSALIDAGREMGLPVLAEAFADRAYEADGRLRDRRYPDALIIDPTACLKQTLSIVRDGVVIAIDGTPVPLQADTICVHGDTPGAAARAAALRHGLEAAGITVRTPR.

It belongs to the LamB/PxpA family. As to quaternary structure, forms a complex composed of PxpA, PxpB and PxpC.

It carries out the reaction 5-oxo-L-proline + ATP + 2 H2O = L-glutamate + ADP + phosphate + H(+). In terms of biological role, catalyzes the cleavage of 5-oxoproline to form L-glutamate coupled to the hydrolysis of ATP to ADP and inorganic phosphate. This is 5-oxoprolinase subunit A from Chloroflexus aggregans (strain MD-66 / DSM 9485).